Here is a 152-residue protein sequence, read N- to C-terminus: MLRRFPTRTTAPGQGGARRSRVRALAWLLASGAMTHLSPALADVPYVLVKTNMVVTSVAMKPYEVTPTRMLVCGIAAKLGAAASSPDAHVPFCFGKDLKRPGSSPMEVMLRAVFMQQRPLRMFLGPKQLTFEGKPALELIRMVECSGKQDCP.

The first 42 residues, 1–42 (MLRRFPTRTTAPGQGGARRSRVRALAWLLASGAMTHLSPALA), serve as a signal peptide directing secretion. Disulfide bonds link cysteine 73–cysteine 93 and cysteine 145–cysteine 151.

As to quaternary structure, pertussis toxin contains five different chains, S1-S5. They are organized into 2 functional subunits: A, composed of S1 (which is toxic) and B, containing S2, S3, S5, and two copies of S4 (B binds to the membrane receptors). Dimers of S2-S4 and S3-S4 are held together by S5.

The protein resides in the secreted. It localises to the host cell membrane. Its function is as follows. PTX oligomer B binds to receptors on the eukaryotic cell surface and facilitates the translocation of the toxic subunit across the cell membrane. This chain is Pertussis toxin subunit 4 (ptxD), found in Bordetella parapertussis (strain 12822 / ATCC BAA-587 / NCTC 13253).